The sequence spans 199 residues: Chaperone protein TorD (199 aa).

It belongs to the TorD/DmsD family. TorD subfamily.

Its subcellular location is the cytoplasm. Involved in the biogenesis of TorA. Acts on TorA before the insertion of the molybdenum cofactor and, as a result, probably favors a conformation of the apoenzyme that is competent for acquiring the cofactor. The protein is Chaperone protein TorD of Escherichia coli O8 (strain IAI1).